A 349-amino-acid chain; its full sequence is GDSL esterase/lipase At2g19060 (349 aa).

The first 25 residues, 1-25 (MADKMFKALLWAFATAVVMAEAVRG), serve as a signal peptide directing secretion. Ser37 (nucleophile) is an active-site residue. A glycan (N-linked (GlcNAc...) asparagine) is linked at Asn178. Active-site residues include Asp317 and His320.

It belongs to the 'GDSL' lipolytic enzyme family.

It localises to the secreted. This is GDSL esterase/lipase At2g19060 from Arabidopsis thaliana (Mouse-ear cress).